Reading from the N-terminus, the 170-residue chain is Urease accessory protein UreE (170 aa).

The protein belongs to the UreE family.

The protein localises to the cytoplasm. Involved in urease metallocenter assembly. Binds nickel. Probably functions as a nickel donor during metallocenter assembly. The sequence is that of Urease accessory protein UreE from Helicobacter pylori (strain G27).